The primary structure comprises 418 residues: Pyrophosphate--fructose 6-phosphate 1-phosphotransferase (418 aa).

Residue G13 participates in diphosphate binding. Residue N111 participates in Mg(2+) binding. Substrate is bound by residues T139–D141, M187–R189, E244, and Y295–R298. The Proton acceptor role is filled by D141.

The protein belongs to the phosphofructokinase type A (PFKA) family. PPi-dependent PFK group II subfamily. Clade 'B2' sub-subfamily. Homodimer. The cofactor is Mg(2+).

The protein localises to the cytoplasm. The catalysed reaction is beta-D-fructose 6-phosphate + diphosphate = beta-D-fructose 1,6-bisphosphate + phosphate + H(+). Its pathway is carbohydrate degradation; glycolysis; D-glyceraldehyde 3-phosphate and glycerone phosphate from D-glucose: step 3/4. With respect to regulation, non-allosteric. In terms of biological role, catalyzes the phosphorylation of D-fructose 6-phosphate, the first committing step of glycolysis. Uses inorganic phosphate (PPi) as phosphoryl donor instead of ATP like common ATP-dependent phosphofructokinases (ATP-PFKs), which renders the reaction reversible, and can thus function both in glycolysis and gluconeogenesis. Consistently, PPi-PFK can replace the enzymes of both the forward (ATP-PFK) and reverse (fructose-bisphosphatase (FBPase)) reactions. This Xanthomonas campestris pv. campestris (strain B100) protein is Pyrophosphate--fructose 6-phosphate 1-phosphotransferase.